Consider the following 275-residue polypeptide: S-formylglutathione hydrolase (275 aa).

Catalysis depends on charge relay system residues serine 145, aspartate 221, and histidine 254.

The protein belongs to the esterase D family.

It carries out the reaction S-formylglutathione + H2O = formate + glutathione + H(+). Its function is as follows. Serine hydrolase involved in the detoxification of formaldehyde. Hydrolyzes S-formylglutathione to glutathione and formate. The protein is S-formylglutathione hydrolase of Haemophilus influenzae (strain ATCC 51907 / DSM 11121 / KW20 / Rd).